A 217-amino-acid chain; its full sequence is Probable GTP-binding protein EngB (217 aa).

The 178-residue stretch at 37–214 (SGLEVAFAGR…RAAMARLIGD (178 aa)) folds into the EngB-type G domain. GTP is bound by residues 45-52 (GRSNVGKS), 72-76 (GRTQE), 92-95 (DMPG), 159-162 (TKAD), and 193-195 (TSS). Mg(2+) is bound by residues Ser-52 and Thr-74.

This sequence belongs to the TRAFAC class TrmE-Era-EngA-EngB-Septin-like GTPase superfamily. EngB GTPase family. It depends on Mg(2+) as a cofactor.

Its function is as follows. Necessary for normal cell division and for the maintenance of normal septation. The protein is Probable GTP-binding protein EngB of Nitrobacter winogradskyi (strain ATCC 25391 / DSM 10237 / CIP 104748 / NCIMB 11846 / Nb-255).